The sequence spans 509 residues: Bifunctional purine biosynthesis protein PurH (509 aa).

The 146-residue stretch at 1–146 (MTIQKINRVL…KNWYRVGVCV (146 aa)) folds into the MGS-like domain.

The protein belongs to the PurH family.

The enzyme catalyses (6R)-10-formyltetrahydrofolate + 5-amino-1-(5-phospho-beta-D-ribosyl)imidazole-4-carboxamide = 5-formamido-1-(5-phospho-D-ribosyl)imidazole-4-carboxamide + (6S)-5,6,7,8-tetrahydrofolate. It carries out the reaction IMP + H2O = 5-formamido-1-(5-phospho-D-ribosyl)imidazole-4-carboxamide. Its pathway is purine metabolism; IMP biosynthesis via de novo pathway; 5-formamido-1-(5-phospho-D-ribosyl)imidazole-4-carboxamide from 5-amino-1-(5-phospho-D-ribosyl)imidazole-4-carboxamide (10-formyl THF route): step 1/1. It participates in purine metabolism; IMP biosynthesis via de novo pathway; IMP from 5-formamido-1-(5-phospho-D-ribosyl)imidazole-4-carboxamide: step 1/1. This Natranaerobius thermophilus (strain ATCC BAA-1301 / DSM 18059 / JW/NM-WN-LF) protein is Bifunctional purine biosynthesis protein PurH.